A 489-amino-acid polypeptide reads, in one-letter code: Glutamate--tRNA ligase (489 aa).

A 'HIGH' region motif is present at residues 10–20 (PSPTGFLHIGG). The 'KMSKS' region motif lies at 261–265 (KLSKR). Lys264 provides a ligand contact to ATP.

This sequence belongs to the class-I aminoacyl-tRNA synthetase family. Glutamate--tRNA ligase type 1 subfamily. In terms of assembly, monomer.

The protein resides in the cytoplasm. It carries out the reaction tRNA(Glu) + L-glutamate + ATP = L-glutamyl-tRNA(Glu) + AMP + diphosphate. In terms of biological role, catalyzes the attachment of glutamate to tRNA(Glu) in a two-step reaction: glutamate is first activated by ATP to form Glu-AMP and then transferred to the acceptor end of tRNA(Glu). The sequence is that of Glutamate--tRNA ligase from Finegoldia magna (strain ATCC 29328 / DSM 20472 / WAL 2508) (Peptostreptococcus magnus).